The chain runs to 135 residues: Sex-regulated protein janus-A (135 aa).

Residue Lys-37 participates in substrate binding. The active-site Proton acceptor is His-63. Position 104-106 (104-106) interacts with substrate; sequence SQG.

The protein belongs to the janus family.

Functionally, janA and janB regulate somatic sex differentiation. In Drosophila simulans (Fruit fly), this protein is Sex-regulated protein janus-A (janA).